The sequence spans 207 residues: MPKYNLINQKGDFLSQIDLDDEIFGISINKQVLYDVVNAQRASMRQGTHATKNRALVSGGGKKPWRQKGTGRARHGTIRSPLWRGGGVAFGPSPRDYSVKVNQKVRRLALKMALSWKINNKNLILIDNINLETHKTKEFQNILDQLNIQQKTLILTKDLNHNLCLSIRNLSKVLLETVSHVSVYQLLSYSTIILTKEAANYFEENLK.

Residues 55–76 (ALVSGGGKKPWRQKGTGRARHG) form a disordered region. The span at 63 to 76 (KPWRQKGTGRARHG) shows a compositional bias: basic residues.

The protein belongs to the universal ribosomal protein uL4 family. As to quaternary structure, part of the 50S ribosomal subunit.

Its function is as follows. One of the primary rRNA binding proteins, this protein initially binds near the 5'-end of the 23S rRNA. It is important during the early stages of 50S assembly. It makes multiple contacts with different domains of the 23S rRNA in the assembled 50S subunit and ribosome. In terms of biological role, forms part of the polypeptide exit tunnel. The polypeptide is Large ribosomal subunit protein uL4 (Phytoplasma mali (strain AT)).